A 584-amino-acid polypeptide reads, in one-letter code: Asparagine synthetase [glutamine-hydrolyzing] 1 (584 aa).

Cysteine 2 (for GATase activity) is an active-site residue. The Glutamine amidotransferase type-2 domain maps to 2-185 (CGILAVLGCS…PGHFYSSKLG (184 aa)). L-glutamine contacts are provided by residues 50–54 (RLAVI), 75–77 (NGE), and aspartate 98. Residues 193 to 516 (PPWFNESVPS…PQNSARLTVP (324 aa)) form the Asparagine synthetase domain. ATP is bound by residues leucine 231, valine 267, and 341-342 (SG).

The enzyme catalyses L-aspartate + L-glutamine + ATP + H2O = L-asparagine + L-glutamate + AMP + diphosphate + H(+). Its pathway is amino-acid biosynthesis; L-asparagine biosynthesis; L-asparagine from L-aspartate (L-Gln route): step 1/1. Essential for nitrogen assimilation, distribution and remobilization within the plant via the phloem. In Arabidopsis thaliana (Mouse-ear cress), this protein is Asparagine synthetase [glutamine-hydrolyzing] 1 (ASN1).